A 137-amino-acid polypeptide reads, in one-letter code: Basic phospholipase A2 2 (137 aa).

The first 11 residues, 1 to 11, serve as a signal peptide directing secretion; it reads LVAVCVSLLGA. Residues 12–19 constitute a propeptide that is removed on maturation; that stretch reads ANIPPQPL. 7 disulfides stabilise this stretch: Cys-30-Cys-89, Cys-44-Cys-136, Cys-46-Cys-62, Cys-61-Cys-117, Cys-68-Cys-110, Cys-78-Cys-103, and Cys-96-Cys-108. The Ca(2+) site is built by Tyr-45 and Gly-47. Tyr-48 contributes to the alpha-D-mannopyranose binding site. Gly-49 is a Ca(2+) binding site. His-65 is an active-site residue. A Ca(2+)-binding site is contributed by Asp-66. Residue Asp-66 participates in alpha-D-mannopyranose binding. Residue Asp-111 is part of the active site.

This sequence belongs to the phospholipase A2 family. Group I subfamily. D49 sub-subfamily. In terms of assembly, homodimer; non-covalently linked. The cofactor is Ca(2+). In terms of processing, homodimerization and interaction of the catalytically important Asp-49 (here Asp-111) with mannose molecules may render this protein inactive. In terms of tissue distribution, expressed by the venom gland.

The protein localises to the secreted. It catalyses the reaction a 1,2-diacyl-sn-glycero-3-phosphocholine + H2O = a 1-acyl-sn-glycero-3-phosphocholine + a fatty acid + H(+). Snake venom phospholipase A2 (PLA2) that shows anticoagulant and neurotoxic activities. Functionally, PLA2 catalyzes the calcium-dependent hydrolysis of the 2-acyl groups in 3-sn-phosphoglycerides. This chain is Basic phospholipase A2 2, found in Bungarus caeruleus (Indian krait).